A 614-amino-acid polypeptide reads, in one-letter code: Vitamin B12 transporter BtuB (614 aa).

The N-terminal stretch at 1–20 (MIKKASLLTACSVTAFSAWA) is a signal peptide. The TonB box signature appears at 26–33 (DTLVVTAI). One can recognise a TBDR plug domain in the interval 38–152 (PRSTVLAPTT…IGGVVNIITT (115 aa)). Residues Leu83, Ser85, Asn92, and 110–111 (VS) contribute to the cyanocob(III)alamin site. The TBDR beta-barrel domain maps to 155 to 614 (EPGTEISAGW…EYTLSGSYTF (460 aa)). The next 3 membrane-spanning stretches (beta stranded) occupy residues 158-165 (TEISAGWG), 169-178 (YQNYDVSTQQ), and 184-195 (TRVTLLGDYAHT). 4 residues coordinate Ca(2+): Asp199, Gln211, Asp213, and Asp215. Transmembrane regions (beta stranded) follow at residues 217–227 (FLSKTLYGALE) and 232–248 (DAWS…NRTN). Ca(2+) contacts are provided by Tyr249 and Asp250. Ala251 is a cyanocob(III)alamin binding site. Asp261 provides a ligand contact to Ca(2+). The next 14 beta stranded transmembrane spans lie at 263-277 (RKLY…LRYN), 279-296 (ELIK…KDYN), 309-325 (TLDE…NNVI), 328-337 (HGSIGAGVDW), 353-369 (YDQR…QQVG), 371-381 (FTFEGAARSDD), 385-400 (FGRH…WEFI), 403-417 (YRFI…KAPN), 434-443 (KSKQWEGAFE), 449-458 (VNWRISGYRN), 473-490 (YYNE…TANF), 494-509 (PLTH…ARNA), 517-529 (RRAK…QLDW), and 535-550 (DWGI…YDKD). Cyanocob(III)alamin is bound at residue Thr309. Arg517 is a cyanocob(III)alamin binding site. A cyanocob(III)alamin-binding site is contributed by Tyr551. Transmembrane regions (beta stranded) follow at residues 558-572 (TVKM…LAVA), 585-596 (IANLFDKDYETV), and 602-614 (AGRE…SYTF). Residues 597-614 (YGYQTAGREYTLSGSYTF) carry the TonB C-terminal box motif.

It belongs to the TonB-dependent receptor family. BtuB (TC 1.B.14.3.1) subfamily.

The protein localises to the cell outer membrane. Its function is as follows. Involved in the active translocation of vitamin B12 (cyanocobalamin) across the outer membrane to the periplasmic space. It derives its energy for transport by interacting with the trans-periplasmic membrane protein TonB. This chain is Vitamin B12 transporter BtuB, found in Shigella flexneri serotype 5b (strain 8401).